The chain runs to 152 residues: Transcriptional regulator MraZ (152 aa).

SpoVT-AbrB domains follow at residues 5-52 (ATLV…PLPE) and 81-124 (ASEC…DETT).

The protein belongs to the MraZ family. In terms of assembly, forms oligomers.

The protein resides in the cytoplasm. It localises to the nucleoid. Negatively regulates its own expression and that of the subsequent genes in the proximal part of the division and cell wall (dcw) gene cluster. Acts by binding directly to DNA. May also regulate the expression of genes outside the dcw cluster. In Escherichia coli O127:H6 (strain E2348/69 / EPEC), this protein is Transcriptional regulator MraZ.